The sequence spans 503 residues: Maturase K (503 aa).

This sequence belongs to the intron maturase 2 family. MatK subfamily.

It localises to the plastid. Its subcellular location is the chloroplast. Functionally, usually encoded in the trnK tRNA gene intron. Probably assists in splicing its own and other chloroplast group II introns. The polypeptide is Maturase K (Actinodium cunninghamii (Albany daisy)).